We begin with the raw amino-acid sequence, 229 residues long: MDTKALHTLTYGLYIITAKKGDRFNGQVANTVFQITSDPPTIAVSINKQNLTHEFIQAGQGFVISVLAREVPLSLIGQFGFKSGREMDKFAGINYKLSEGGLPYLADHTLAYLEASLNQTVDAGTHSIFIGTVTDAAVLLQGEPMTYAYYHQVKRGTTPKTAPTFTVGREKDKTALASPKYQCTICNYVYDPVQGDPEHGIAPGTPFADLPEDWTCPICGAGKDAFEQI.

A flavodoxin-reductase-like region spans residues 1-158; the sequence is MDTKALHTLT…YYHQVKRGTT (158 aa). The region spanning 178–229 is the Rubredoxin-like domain; sequence SPKYQCTICNYVYDPVQGDPEHGIAPGTPFADLPEDWTCPICGAGKDAFEQI. Fe cation contacts are provided by cysteine 183, cysteine 186, cysteine 216, and cysteine 219.

In the N-terminal section; belongs to the flavodoxin reductase family. As to quaternary structure, homodimer. Fe cation serves as cofactor. FMN is required as a cofactor.

Functionally, has nitric oxide reductase activity in combination with FprA; probably involved in nitrosative stress protection. Acts as an NADH:FprA oxidoreductase. In Moorella thermoacetica (strain ATCC 39073 / JCM 9320), this protein is High molecular weight rubredoxin (hrb).